The sequence spans 416 residues: N-carbamoyl-L-amino-acid amidohydrolase (416 aa).

4 residues coordinate a divalent metal cation: His87, Asp98, Glu133, and His194. The an N-carbamoyl-L-alpha-amino acid site is built by Gln197, His230, Asn279, Arg292, and Gly361. An involved in dimerization region spans residues 213-331 (HCQGLWWLEF…SIEAVGHFDP (119 aa)). His386 is a binding site for a divalent metal cation.

It belongs to the peptidase M20 family. Homodimer. Mn(2+) serves as cofactor. Requires Ni(2+) as cofactor. Co(2+) is required as a cofactor. It depends on Fe(2+) as a cofactor.

The catalysed reaction is an N-carbamoyl-L-alpha-amino acid + H2O + 2 H(+) = an L-alpha-amino acid + NH4(+) + CO2. The enzyme catalyses N-carbamoyl-L-methionine + H2O + 2 H(+) = L-methionine + NH4(+) + CO2. It carries out the reaction N-acetyl-L-methionine + H2O = L-methionine + acetate. It catalyses the reaction N(alpha)-formyl-L-methionine + H2O = formate + L-methionine. The catalysed reaction is N-carbamoyl-L-alanine + H2O + 2 H(+) = L-alanine + NH4(+) + CO2. The enzyme catalyses N-carbamoyl-L-cysteine + H2O + 2 H(+) = L-cysteine + NH4(+) + CO2. It carries out the reaction N-carbamoyl-L-tryptophan + H2O + 2 H(+) = L-tryptophan + NH4(+) + CO2. It catalyses the reaction N-carbamoyl-L-valine + H2O + 2 H(+) = L-valine + NH4(+) + CO2. The catalysed reaction is N-carbamoyl-L-phenylalanine + H2O + 2 H(+) = L-phenylalanine + NH4(+) + CO2. Strongly inhibited by Hg(2+), Cu(2+), Zn(2+), Pb(2+) and Fe(3+) ions, and slightly inhibited by Na(+) and K(+) ions. Beta-mercaptoethanol and 5,5'-dithiobis-(2-nitrobenzoic acid)(DTNB) cause 34% and 42% inhibition, respectively. Functionally, catalyzes the hydrolysis of both aliphatic and aromatic N-carbamoyl-L-alpha-amino acids to free L-alpha-amino acids. Is strictly L-specific since it is inactive toward N-carbamoyl-D-alpha-amino acids. Is also able to hydrolyze N-formyl-L-methionine and N-acetyl-L-methionine, but not ureidosuccinate or 3-ureidopropanoate. This Rhizobium meliloti (Ensifer meliloti) protein is N-carbamoyl-L-amino-acid amidohydrolase.